The following is a 359-amino-acid chain: Putative nucleotidyltransferase MAB21L1 (359 aa).

A ribonucleoside 5'-triphosphate-binding positions include 23–24 (RK) and 63–66 (FEGL). 2 residues coordinate Mg(2+): Glu73 and Glu75. Residues Lys248 and 252 to 255 (SLLK) contribute to the a ribonucleoside 5'-triphosphate site.

The protein belongs to the mab-21 family. Monomer. Homodecamer; composed of 2 back to back homopentamers. The protein may exist as monomer in solution and oiligomerizes upon ligand binding.

The protein resides in the nucleus. In terms of biological role, putative nucleotidyltransferase required for several aspects of embryonic development including normal development of the eye. It is unclear whether it displays nucleotidyltransferase activity in vivo. Binds single-stranded RNA (ssRNA). The sequence is that of Putative nucleotidyltransferase MAB21L1 (mab21l1) from Danio rerio (Zebrafish).